The sequence spans 101 residues: Small ribosomal subunit protein uS14A (101 aa).

Residues 32 to 71 are disordered; that stretch reads RRPGTPEPERNRAVEELRRQPRDASATRVRNRDSVDGRPR. Composition is skewed to basic and acidic residues over residues 38–53 and 61–70; these read EPERNRAVEELRRQPR and RNRDSVDGRP.

The protein belongs to the universal ribosomal protein uS14 family. As to quaternary structure, part of the 30S ribosomal subunit. Contacts proteins S3 and S10.

Binds 16S rRNA, required for the assembly of 30S particles and may also be responsible for determining the conformation of the 16S rRNA at the A site. In Streptomyces griseus subsp. griseus (strain JCM 4626 / CBS 651.72 / NBRC 13350 / KCC S-0626 / ISP 5235), this protein is Small ribosomal subunit protein uS14A.